A 140-amino-acid chain; its full sequence is Callisulfakinin (140 aa).

The N-terminal stretch at M1 to A30 is a signal peptide. Positions R31–K109 are excised as a propeptide. The residue at position 114 (Y114) is a Sulfotyrosine. Position 119 is a phenylalanine amide (F119). Y131 is subject to Sulfotyrosine. F136 bears the Phenylalanine amide mark. A propeptide spanning residues S139–I140 is cleaved from the precursor.

Belongs to the gastrin/cholecystokinin family. As to expression, in brain, it is specifically expressed in four pairs of neurons. Not expressed in other cells of the brain and in the thoracico-abdominal ganglion.

It is found in the secreted. Callisulfakinin I is a neuropeptide. The existence of Callisulfakinin II is uncertain. The sequence is that of Callisulfakinin from Calliphora vomitoria (Blue bottle fly).